The following is a 133-amino-acid chain: Ribosome-binding factor A (133 aa).

It belongs to the RbfA family. In terms of assembly, monomer. Binds 30S ribosomal subunits, but not 50S ribosomal subunits or 70S ribosomes.

Its subcellular location is the cytoplasm. Its function is as follows. One of several proteins that assist in the late maturation steps of the functional core of the 30S ribosomal subunit. Associates with free 30S ribosomal subunits (but not with 30S subunits that are part of 70S ribosomes or polysomes). Required for efficient processing of 16S rRNA. May interact with the 5'-terminal helix region of 16S rRNA. This is Ribosome-binding factor A from Salmonella typhi.